We begin with the raw amino-acid sequence, 168 residues long: Photosystem I assembly protein Ycf3 (168 aa).

TPR repeat units lie at residues 35-68, 72-105, and 120-153; these read AFTY…EIDP, SYIL…NPFL, and GEQA…TPGN.

Belongs to the Ycf3 family.

The protein resides in the plastid. Its subcellular location is the chloroplast thylakoid membrane. In terms of biological role, essential for the assembly of the photosystem I (PSI) complex. May act as a chaperone-like factor to guide the assembly of the PSI subunits. The sequence is that of Photosystem I assembly protein Ycf3 from Calycanthus floridus var. glaucus (Eastern sweetshrub).